The following is a 271-amino-acid chain: Fatty acid elongase 2 (271 aa).

A helical transmembrane segment spans residues 16-36 (WMIDNVDVAGFLCLLYLGLVW). N-linked (GlcNAc...) asparagine glycosylation occurs at Asn52. A run of 2 helical transmembrane segments spans residues 59–79 (VFIM…IVVV) and 110–130 (FWVG…VLLV). The HxxHH motif signature appears at 140-144 (HWYHH). His143 acts as the Nucleophile in catalysis. A run of 3 helical transmembrane segments spans residues 162 to 182 (IFVF…YFAM), 194 to 214 (IAPV…AVTM), and 241 to 261 (GVVM…ESYL).

This sequence belongs to the ELO family.

It is found in the endoplasmic reticulum membrane. The enzyme catalyses an acyl-CoA + malonyl-CoA + H(+) = a 3-oxoacyl-CoA + CO2 + CoA. The protein operates within lipid metabolism; fatty acid biosynthesis. Its function is as follows. Involved in the synthesis of fatty acids. Elongates C10 fatty acids to C14. The polypeptide is Fatty acid elongase 2 (Trypanosoma brucei brucei (strain 927/4 GUTat10.1)).